Consider the following 324-residue polypeptide: Beta-ketoacyl-[acyl-carrier-protein] synthase III (324 aa).

Catalysis depends on residues cysteine 112 and histidine 249. Residues 250–254 (QANRR) are ACP-binding. Asparagine 279 is a catalytic residue.

It belongs to the thiolase-like superfamily. FabH family. In terms of assembly, homodimer.

The protein resides in the cytoplasm. The catalysed reaction is malonyl-[ACP] + acetyl-CoA + H(+) = 3-oxobutanoyl-[ACP] + CO2 + CoA. It participates in lipid metabolism; fatty acid biosynthesis. In terms of biological role, catalyzes the condensation reaction of fatty acid synthesis by the addition to an acyl acceptor of two carbons from malonyl-ACP. Catalyzes the first condensation reaction which initiates fatty acid synthesis and may therefore play a role in governing the total rate of fatty acid production. Possesses both acetoacetyl-ACP synthase and acetyl transacylase activities. Its substrate specificity determines the biosynthesis of branched-chain and/or straight-chain of fatty acids. The chain is Beta-ketoacyl-[acyl-carrier-protein] synthase III from Streptococcus equi subsp. zooepidemicus (strain H70).